Consider the following 114-residue polypeptide: Probable 4-amino-4-deoxy-L-arabinose-phosphoundecaprenol flippase subunit ArnE (114 aa).

3 helical membrane-spanning segments follow: residues Leu38 to Leu58, Leu64 to Ala84, and Leu94 to Leu114. Residues Leu43 to Trp112 form the EamA domain.

The protein belongs to the ArnE family. In terms of assembly, heterodimer of ArnE and ArnF.

It localises to the cell inner membrane. Its pathway is bacterial outer membrane biogenesis; lipopolysaccharide biosynthesis. Functionally, translocates 4-amino-4-deoxy-L-arabinose-phosphoundecaprenol (alpha-L-Ara4N-phosphoundecaprenol) from the cytoplasmic to the periplasmic side of the inner membrane. This is Probable 4-amino-4-deoxy-L-arabinose-phosphoundecaprenol flippase subunit ArnE from Yersinia pseudotuberculosis serotype O:1b (strain IP 31758).